Here is a 553-residue protein sequence, read N- to C-terminus: Putative transport protein YidE (553 aa).

5 helical membrane-spanning segments follow: residues 4 to 24 (IALT…IGNV), 28 to 48 (GIGL…HFVS), 65 to 85 (FGLI…FFAS), 95 to 115 (LFAV…HKLF), and 158 to 178 (MSYA…MWML). RCK C-terminal domains are found at residues 191 to 276 (QQHE…VIGQ) and 279 to 361 (DTSL…VLGN). The next 6 helical transmembrane spans lie at 371–391 (MLPV…PVFV), 393–413 (GFPA…ALIL), 439–459 (IVLF…NTLV), 464–484 (LSWI…VGIL), 493–513 (YLTM…LAFA), and 533–553 (LVMF…WSIG).

The protein belongs to the AAE transporter (TC 2.A.81) family. YidE subfamily.

The protein resides in the cell membrane. This Shigella boydii serotype 4 (strain Sb227) protein is Putative transport protein YidE.